The following is a 142-amino-acid chain: HTH-type transcriptional regulator MntR (142 aa).

The 63-residue stretch at 1–63 (MTTPSMEDYI…YEKYRGLVLT (63 aa)) folds into the HTH dtxR-type domain. Residues Asp-8, Glu-11, His-77, Glu-99, Glu-102, and His-103 each contribute to the Cd(2+) site. The Mn(2+) site is built by Asp-8, Glu-11, His-77, Glu-99, Glu-102, and His-103.

It belongs to the DtxR/MntR family. As to quaternary structure, homodimer.

Its subcellular location is the cytoplasm. With respect to regulation, DNA binding is strongly activated by Mn(2+) and Cd(2+), but it is poorly activated by non-cognate metal cations, including Co(2+), Fe(2+), Ni(2+), Ca(2+) and Zn(2+). In the strict absence of divalent transition metal ions, MntR has a low affinity for DNA. Its function is as follows. Central regulator of manganese homeostasis that regulates the expression of both manganese uptake and efflux systems. In the presence of high levels of manganese, it mediates repression of the manganese uptake systems MntH and MntABCD and activation of the efflux systems MneP and MneS. Binds with high affinity to the regulatory regions of its target genes. The manganese concentration required for activation of efflux is higher than that for repression of uptake. The sequence is that of HTH-type transcriptional regulator MntR from Bacillus subtilis (strain 168).